Here is a 297-residue protein sequence, read N- to C-terminus: Urease accessory protein UreD (297 aa).

Residues 1 to 41 (MPQAADIATAPQRPSAPGDVVAAGQPPRARGRAHVSSKRRD) form a disordered region.

Belongs to the UreD family. UreD, UreF and UreG form a complex that acts as a GTP-hydrolysis-dependent molecular chaperone, activating the urease apoprotein by helping to assemble the nickel containing metallocenter of UreC. The UreE protein probably delivers the nickel.

It localises to the cytoplasm. In terms of biological role, required for maturation of urease via the functional incorporation of the urease nickel metallocenter. The polypeptide is Urease accessory protein UreD (Ruegeria sp. (strain TM1040) (Silicibacter sp.)).